The sequence spans 187 residues: Oligoribonuclease (187 aa).

Positions 7-170 constitute an Exonuclease domain; it reads LIWIDLEMTG…DDIKDSINEL (164 aa). Residue Tyr-128 is part of the active site.

It belongs to the oligoribonuclease family.

It localises to the cytoplasm. 3'-to-5' exoribonuclease specific for small oligoribonucleotides. This is Oligoribonuclease from Legionella pneumophila (strain Paris).